A 315-amino-acid polypeptide reads, in one-letter code: Olfactory receptor 4E1 (315 aa).

Topologically, residues 1 to 33 (MEEAILLNQTSLVTYFRLRGLSVNHKARIAMFS) are extracellular. N8 is a glycosylation site (N-linked (GlcNAc...) asparagine). The helical transmembrane segment at 34–54 (MFLIFYVLTLIGNVLIVITII) threads the bilayer. Over 55 to 61 (YDHRLHT) the chain is Cytoplasmic. Residues 62-82 (PMYFFLSNLSFIDVCHSTVTV) traverse the membrane as a helical segment. Residues 83-101 (PKMLRDVWSEEKLISFDAC) lie on the Extracellular side of the membrane. Cysteines 101 and 183 form a disulfide. The chain crosses the membrane as a helical span at residues 102–122 (VTQMFFLHLFACTEIFLLTVM). At 123 to 143 (AYDRYVAICKPLQYMIVMNWK) the chain is on the cytoplasmic side. A helical membrane pass occupies residues 144 to 164 (VCVLLAVALWTGGTIHSIALT). At 165 to 208 (SLTIKLPYCGPDEIDNFFCDVPQVIKLACIDTHVIEILIVSNSG) the chain is on the extracellular side. A helical transmembrane segment spans residues 209–229 (LISVVCFVVLVVSYAVILVSL). At 230–240 (RQQISKGKRKA) the chain is on the cytoplasmic side. A helical transmembrane segment spans residues 241–261 (LSTCAAHLTVVTLFLGHCIFI). Over 262–272 (YSRPSTSLPED) the chain is Extracellular. The helical transmembrane segment at 273–293 (KVVSVFFTAVTPLLNPIIYTL) threads the bilayer. Topologically, residues 294 to 315 (RNEEMKSALNKLVGRKERKEEK) are cytoplasmic.

Belongs to the G-protein coupled receptor 1 family.

The protein resides in the cell membrane. Its function is as follows. Odorant receptor. In Homo sapiens (Human), this protein is Olfactory receptor 4E1 (OR4E1).